We begin with the raw amino-acid sequence, 274 residues long: NADPH-dependent 7-cyano-7-deazaguanine reductase (274 aa).

80–82 (VES) provides a ligand contact to substrate. 82 to 83 (SK) lines the NADPH pocket. The active-site Thioimide intermediate is cysteine 181. Residue aspartate 188 is the Proton donor of the active site. 220–221 (HE) is a substrate binding site. 249 to 250 (RG) is an NADPH binding site.

It belongs to the GTP cyclohydrolase I family. QueF type 2 subfamily. As to quaternary structure, homodimer.

The protein resides in the cytoplasm. The catalysed reaction is 7-aminomethyl-7-carbaguanine + 2 NADP(+) = 7-cyano-7-deazaguanine + 2 NADPH + 3 H(+). Its pathway is tRNA modification; tRNA-queuosine biosynthesis. In terms of biological role, catalyzes the NADPH-dependent reduction of 7-cyano-7-deazaguanine (preQ0) to 7-aminomethyl-7-deazaguanine (preQ1). The protein is NADPH-dependent 7-cyano-7-deazaguanine reductase of Burkholderia vietnamiensis (strain G4 / LMG 22486) (Burkholderia cepacia (strain R1808)).